The following is a 116-amino-acid chain: MRHRRRTPHLNKPADQRKALMRALTTALLREGRITTTKARAKAIRATTEKMITLAKEGSLAARRQALAYIYDKELVRSLFEQAPERYRDRPGGYTRILRTVHRRGDGAEMAVIELV.

This sequence belongs to the bacterial ribosomal protein bL17 family. In terms of assembly, part of the 50S ribosomal subunit. Contacts protein L32.

This chain is Large ribosomal subunit protein bL17, found in Synechococcus sp. (strain JA-2-3B'a(2-13)) (Cyanobacteria bacterium Yellowstone B-Prime).